The following is a 479-amino-acid chain: NADH dehydrogenase [ubiquinone] flavoprotein 1, mitochondrial (479 aa).

103-112 provides a ligand contact to NADH; sequence GRGGAGFPSG. 216 to 264 serves as a coordination point for FMN; that stretch reads RGAGAYICGEETALIESIEGKQGKPRLKPPFPAMAGLYGCPTTVTNVET. The [4Fe-4S] cluster site is built by Cys396, Cys399, Cys402, and Cys442.

The protein belongs to the complex I 51 kDa subunit family. As to quaternary structure, complex I is composed of about 45 different subunits. This is a component of the flavoprotein-sulfur (FP) fragment of the enzyme. Requires FMN as cofactor. [4Fe-4S] cluster is required as a cofactor.

The protein localises to the mitochondrion inner membrane. It carries out the reaction a ubiquinone + NADH + 5 H(+)(in) = a ubiquinol + NAD(+) + 4 H(+)(out). Core subunit of the mitochondrial membrane respiratory chain NADH dehydrogenase (Complex I) that is believed to belong to the minimal assembly required for catalysis. Complex I functions in the transfer of electrons from NADH to the respiratory chain. The immediate electron acceptor for the enzyme is believed to be ubiquinone. This Dictyostelium discoideum (Social amoeba) protein is NADH dehydrogenase [ubiquinone] flavoprotein 1, mitochondrial (ndufv1).